The following is a 200-amino-acid chain: Pyridoxal 5'-phosphate synthase subunit PdxT (200 aa).

Residue 52 to 54 (GES) participates in L-glutamine binding. Cys84 functions as the Nucleophile in the catalytic mechanism. L-glutamine-binding positions include Arg115 and 143–144 (IR). Active-site charge relay system residues include His179 and Glu181.

Belongs to the glutaminase PdxT/SNO family. In terms of assembly, in the presence of PdxS, forms a dodecamer of heterodimers. Only shows activity in the heterodimer.

The enzyme catalyses aldehydo-D-ribose 5-phosphate + D-glyceraldehyde 3-phosphate + L-glutamine = pyridoxal 5'-phosphate + L-glutamate + phosphate + 3 H2O + H(+). It carries out the reaction L-glutamine + H2O = L-glutamate + NH4(+). It functions in the pathway cofactor biosynthesis; pyridoxal 5'-phosphate biosynthesis. Functionally, catalyzes the hydrolysis of glutamine to glutamate and ammonia as part of the biosynthesis of pyridoxal 5'-phosphate. The resulting ammonia molecule is channeled to the active site of PdxS. In Methanosarcina barkeri (strain Fusaro / DSM 804), this protein is Pyridoxal 5'-phosphate synthase subunit PdxT.